Consider the following 338-residue polypeptide: 5-dehydro-2-deoxygluconokinase (338 aa).

It belongs to the carbohydrate kinase PfkB family.

The catalysed reaction is 5-dehydro-2-deoxy-D-gluconate + ATP = 6-phospho-5-dehydro-2-deoxy-D-gluconate + ADP + H(+). Its pathway is polyol metabolism; myo-inositol degradation into acetyl-CoA; acetyl-CoA from myo-inositol: step 5/7. Catalyzes the phosphorylation of 5-dehydro-2-deoxy-D-gluconate (2-deoxy-5-keto-D-gluconate or DKG) to 6-phospho-5-dehydro-2-deoxy-D-gluconate (DKGP). In Mesomycoplasma hyopneumoniae (strain 7448) (Mycoplasma hyopneumoniae), this protein is 5-dehydro-2-deoxygluconokinase.